The chain runs to 249 residues: 2,3-bisphosphoglycerate-dependent phosphoglycerate mutase (249 aa).

Substrate-binding positions include 9-16 (RHGQSQWN), 22-23 (TG), Arg61, 88-91 (ERHY), Lys99, 115-116 (RR), and 184-185 (GN). The active-site Tele-phosphohistidine intermediate is His10. Glu88 (proton donor/acceptor) is an active-site residue.

It belongs to the phosphoglycerate mutase family. BPG-dependent PGAM subfamily. Homodimer.

The enzyme catalyses (2R)-2-phosphoglycerate = (2R)-3-phosphoglycerate. Its pathway is carbohydrate degradation; glycolysis; pyruvate from D-glyceraldehyde 3-phosphate: step 3/5. Functionally, catalyzes the interconversion of 2-phosphoglycerate and 3-phosphoglycerate. This Xylella fastidiosa (strain 9a5c) protein is 2,3-bisphosphoglycerate-dependent phosphoglycerate mutase.